Consider the following 258-residue polypeptide: Acetylglutamate kinase (258 aa).

Residues Gly-44–Gly-45, Arg-66, and Asn-158 contribute to the substrate site. ATP contacts are provided by residues Asp-181 to Leu-186 and Ile-209 to Thr-211.

Belongs to the acetylglutamate kinase family. ArgB subfamily. In terms of assembly, homodimer.

Its subcellular location is the cytoplasm. It catalyses the reaction N-acetyl-L-glutamate + ATP = N-acetyl-L-glutamyl 5-phosphate + ADP. It functions in the pathway amino-acid biosynthesis; L-arginine biosynthesis; N(2)-acetyl-L-ornithine from L-glutamate: step 2/4. Functionally, catalyzes the ATP-dependent phosphorylation of N-acetyl-L-glutamate. The chain is Acetylglutamate kinase from Escherichia coli O6:K15:H31 (strain 536 / UPEC).